A 320-amino-acid chain; its full sequence is Annexin A5 (320 aa).

N-acetylalanine is present on Ala2. Annexin repeat units follow at residues 15–86 (FDER…ALMK), 87–158 (PSRL…VLLQ), 170–242 (AQVE…AVVK), and 246–317 (SIPA…LLCG). A Glycyl lysine isopeptide (Lys-Gly) (interchain with G-Cter in SUMO1); alternate cross-link involves residue Lys29. A Glycyl lysine isopeptide (Lys-Gly) (interchain with G-Cter in SUMO2); alternate cross-link involves residue Lys29. Ser37 is subject to Phosphoserine. 5 positions are modified to N6-acetyllysine: Lys70, Lys76, Lys79, Lys97, and Lys101. N6-succinyllysine is present on Lys290. The short motif at 314–319 (LLCGED) is the [IL]-x-C-x-x-[DE] motif element.

Belongs to the annexin family. As to quaternary structure, monomer. Binds ATRX and EIF5B. Interacts with hepatitis B virus (HBV). In terms of processing, S-nitrosylation is induced by interferon-gamma and oxidatively-modified low-densitity lipoprotein (LDL(ox)) possibly implicating the iNOS-S100A8/9 transnitrosylase complex.

In terms of biological role, this protein is an anticoagulant protein that acts as an indirect inhibitor of the thromboplastin-specific complex, which is involved in the blood coagulation cascade. This Homo sapiens (Human) protein is Annexin A5 (ANXA5).